The following is a 419-amino-acid chain: Transcription factor IIIB 50 kDa subunit (419 aa).

The TFIIB-type zinc-finger motif lies at 2–36 (PGRGRCPDCGSTELVEDSHYSQSQLVCSDCGCVVT). Cysteine 7, cysteine 10, cysteine 28, and cysteine 31 together coordinate Zn(2+). 2 repeat units span residues 72–157 (GLRR…MQIV) and 173–249 (VKTY…SLAR). The tract at residues 108–114 (AARLQKK) is interaction with target DNA. Residues 314-326 (DGTAEVETREKEP) are compositionally biased toward basic and acidic residues. Residues 314 to 351 (DGTAEVETREKEPPGWGQGQGEGEVGNNSLGLPQGKRP) form a disordered region. Serine 353 is modified (phosphoserine). A required for the formation of a ternary complex with DNA and TBP; not required for interaction with TBP in the absence of DNA region spans residues 357–363 (LLPPCML). Cysteine 361 bears the Cysteine sulfenic acid (-SOH) mark. Positions 365 to 419 (SPKRICPVPPVSTVTGDENISDSEIEQYLRTPQEVRDFQRAQAARQAATSVPNPP) are required for interaction with TBP and formation of a ternary complex with DNA and TBP.

It belongs to the TFIIB family. Component of TFIIIB complexes. The TFIIIB complex has two activities, alpha and beta. The TFIIIB-alpha activity complex is composed of TBP, BDP1, and a complex containing both BRF2 and at least four stably associated proteins; this complex inhibits the transcription by pol III via its phosphorylation by CK2; YY1 facilitates the TFIIIB-alpha complex formation. Interacts with TBP; this interaction promotes recruitment of BRF2 to TATA box-containing promoters. Interacts with TBP and the BURE sequence (GC-rich sequence downstream from the TATA box) to form a strong ternary complex which is joined by BDP1; this ternary complex stimulates pol III transcription. Forms a trimeric complex composed of TBP, BRF2 and mini-SNAPc complex (SNAP43, SNAP50, and the N-terminal third of SNAP190) on the promoter. Assembly of the TBP-BRF2 complex is stimulated by SNAP190. Interacts with MAF1 and SNAPC4. In response to oxidative stress, Cys-361 is reversibly oxidized to cysteine sulfenic acid. Oxidation of Cys-361 impairs formation of a ternary complex with TBP and DNA and down-regulates expression of target genes in response to oxidative stress.

Its subcellular location is the nucleus. Its function is as follows. General activator of RNA polymerase III transcription. Factor exclusively required for RNA polymerase III transcription of genes with promoter elements upstream of the initiation sites. Contributes to the regulation of gene expression; functions as activator in the absence of oxidative stress. Down-regulates expression of target genes in response to oxidative stress. Overexpression protects cells against apoptosis in response to oxidative stress. This Homo sapiens (Human) protein is Transcription factor IIIB 50 kDa subunit (BRF2).